Consider the following 72-residue polypeptide: V-type proton ATPase subunit e (72 aa).

Topologically, residues 1 to 2 (MS) are lumenal. A helical transmembrane segment spans residues 3–23 (FYTVVATFLSVVLASAVFWVL). The Cytoplasmic segment spans residues 24–34 (APKENQTVWRS). Residues 35 to 55 (TIILSMSMMFLMWAVTYLSQL) traverse the membrane as a helical segment. The Lumenal portion of the chain corresponds to 56-72 (HPLVVPRRSDLRPEFAE).

This sequence belongs to the V-ATPase e1/e2 subunit family. As to quaternary structure, V-ATPase is a heteromultimeric enzyme composed of a peripheral catalytic V1 complex (components A to H) attached to an integral membrane V0 proton pore complex (components: a, c, c', c'', d, e, f and VOA1).

The protein resides in the vacuole membrane. In terms of biological role, subunit of the V0 complex of vacuolar(H+)-ATPase (V-ATPase), a multisubunit enzyme composed of a peripheral complex (V1) that hydrolyzes ATP and a membrane integral complex (V0) that translocates protons. V-ATPase is responsible for acidifying and maintaining the pH of intracellular compartments. The chain is V-type proton ATPase subunit e (VMA9) from Eremothecium gossypii (strain ATCC 10895 / CBS 109.51 / FGSC 9923 / NRRL Y-1056) (Yeast).